A 459-amino-acid chain; its full sequence is Bifunctional protein GlmU (459 aa).

The segment at 1 to 229 (MSNFAIXLAA…FDESLGVNDR (229 aa)) is pyrophosphorylase. UDP-N-acetyl-alpha-D-glucosamine contacts are provided by residues 8 to 11 (LAAG), Lys22, Gln72, and 77 to 78 (GT). Asp102 provides a ligand contact to Mg(2+). UDP-N-acetyl-alpha-D-glucosamine contacts are provided by Gly139, Glu154, Asn169, and Asn227. Mg(2+) is bound at residue Asn227. A linker region spans residues 230–250 (VALATAESVMRRRINHKHMVN). The segment at 251–459 (GVSFVNPEAT…TRLPHHPKNQ (209 aa)) is N-acetyltransferase. Residues Arg332 and Lys350 each coordinate UDP-N-acetyl-alpha-D-glucosamine. The Proton acceptor role is filled by His362. Residues Tyr365 and Asn376 each coordinate UDP-N-acetyl-alpha-D-glucosamine. Acetyl-CoA contacts are provided by residues Ala379, 385-386 (NY), Ser404, Ala422, and Arg439.

The protein in the N-terminal section; belongs to the N-acetylglucosamine-1-phosphate uridyltransferase family. This sequence in the C-terminal section; belongs to the transferase hexapeptide repeat family. Homotrimer. Requires Mg(2+) as cofactor.

It is found in the cytoplasm. It carries out the reaction alpha-D-glucosamine 1-phosphate + acetyl-CoA = N-acetyl-alpha-D-glucosamine 1-phosphate + CoA + H(+). The catalysed reaction is N-acetyl-alpha-D-glucosamine 1-phosphate + UTP + H(+) = UDP-N-acetyl-alpha-D-glucosamine + diphosphate. The protein operates within nucleotide-sugar biosynthesis; UDP-N-acetyl-alpha-D-glucosamine biosynthesis; N-acetyl-alpha-D-glucosamine 1-phosphate from alpha-D-glucosamine 6-phosphate (route II): step 2/2. It participates in nucleotide-sugar biosynthesis; UDP-N-acetyl-alpha-D-glucosamine biosynthesis; UDP-N-acetyl-alpha-D-glucosamine from N-acetyl-alpha-D-glucosamine 1-phosphate: step 1/1. It functions in the pathway bacterial outer membrane biogenesis; LPS lipid A biosynthesis. Functionally, catalyzes the last two sequential reactions in the de novo biosynthetic pathway for UDP-N-acetylglucosamine (UDP-GlcNAc). The C-terminal domain catalyzes the transfer of acetyl group from acetyl coenzyme A to glucosamine-1-phosphate (GlcN-1-P) to produce N-acetylglucosamine-1-phosphate (GlcNAc-1-P), which is converted into UDP-GlcNAc by the transfer of uridine 5-monophosphate (from uridine 5-triphosphate), a reaction catalyzed by the N-terminal domain. The polypeptide is Bifunctional protein GlmU (Streptococcus pneumoniae serotype 19F (strain G54)).